Here is a 530-residue protein sequence, read N- to C-terminus: Pentatricopeptide repeat-containing protein At3g51320 (530 aa).

PPR repeat units follow at residues Lys-82–Pro-116, Asp-117–Gln-151, Val-152–Arg-182, Asp-183–Ser-217, Trp-218–Gly-248, Asn-249–Ser-283, Ser-284–Arg-314, Asn-315–Pro-349, Asp-350–Glu-380, and Asn-386–Pro-420. A type E motif region spans residues Lys-424–Lys-499.

Belongs to the PPR family. PCMP-E subfamily.

The sequence is that of Pentatricopeptide repeat-containing protein At3g51320 from Arabidopsis thaliana (Mouse-ear cress).